The following is a 512-amino-acid chain: Intermediate filament family orphan 2 (512 aa).

The IF rod domain occupies 50–479 (NIHLLKGLNV…RLIKGSADRN (430 aa)). The interval 473–512 (KGSADRNSPSPSSVASSDSGSTDEIQEDLEREADVEPMVS) is disordered. The segment covering 480–492 (SPSPSSVASSDSG) has biased composition (low complexity). The span at 496-512 (EIQEDLEREADVEPMVS) shows a compositional bias: acidic residues.

It belongs to the intermediate filament family.

This Mus musculus (Mouse) protein is Intermediate filament family orphan 2 (Iffo2).